A 2554-amino-acid polypeptide reads, in one-letter code: Protein sevenless (2554 aa).

Polar residues predominate over residues 1–10 (MTMFWQQNVD). The interval 1-25 (MTMFWQQNVDHQSDEQDKQAKGAAP) is disordered. Topologically, residues 1 to 2123 (MTMFWQQNVD…AEPFVSPEKR (2123 aa)) are extracellular. Residues 11-20 (HQSDEQDKQA) show a composition bias toward basic and acidic residues. An N-linked (GlcNAc...) asparagine glycan is attached at Asn30. Residues 51–70 (NQQAPGTSSSSSNSQNASPS) are compositionally biased toward low complexity. Residues 51 to 75 (NQQAPGTSSSSSNSQNASPSKIVVR) are disordered. N-linked (GlcNAc...) asparagine glycosylation is present at Asn129. The interval 181–208 (SRPQSTMAHHPDDRDRDRDPSEEQHGVD) is disordered. The segment covering 189 to 208 (HHPDDRDRDRDPSEEQHGVD) has biased composition (basic and acidic residues). Residues 440–533 (APVIEHLMGL…GFVQTHSARN (94 aa)) form the Fibronectin type-III 1 domain. Asn481, Asn505, Asn617, and Asn647 each carry an N-linked (GlcNAc...) asparagine glycan. The Fibronectin type-III 2 domain maps to 824-924 (AGGKPHSLKA…EPLAARTWPL (101 aa)). Asn966 carries N-linked (GlcNAc...) asparagine glycosylation. The stretch at 1010 to 1053 (GRVYWTDLARNCVVRMDPWSGSRELLPVFEANFLALDPRQGHLY) is one LDL-receptor class B repeat. 2 consecutive Fibronectin type-III domains span residues 1202-1290 (LPDS…TPPV) and 1294-1397 (QPRR…VAPE). Residues Asn1228, Asn1313, Asn1353, Asn1550, Asn1557, Asn1639, Asn1725, Asn1756, Asn1804, Asn1889, Asn1947, and Asn2073 are each glycosylated (N-linked (GlcNAc...) asparagine). Fibronectin type-III domains lie at 1801–1901 (PPRN…SFAE), 1902–1988 (LPEL…VYET), and 1995–2117 (QPGK…AEPF). A helical membrane pass occupies residues 2124 to 2147 (GSLVLAIIAPAAIVSSCVLALVLV). The Cytoplasmic segment spans residues 2148–2554 (RKVQKRRLRA…LYANEGVSRL (407 aa)). The 277-residue stretch at 2209-2485 (LKLLRFLGSG…RCYNTLHAIS (277 aa)) folds into the Protein kinase domain. ATP contacts are provided by residues 2215 to 2223 (LGSGAFGEV) and Lys2242. Asp2343 serves as the catalytic Proton acceptor. Residue Tyr2380 is modified to Phosphotyrosine; by autocatalysis. Over residues 2515 to 2527 (GQPLEEHREHNER) the composition is skewed to basic and acidic residues. Residues 2515–2534 (GQPLEEHREHNERPEDENLT) are disordered.

The protein belongs to the protein kinase superfamily. Tyr protein kinase family. Insulin receptor subfamily. May form a complex with drk and Sos. Binds the phosphotyrosine interaction domain (PID) of Dab.

It is found in the cell membrane. The enzyme catalyses L-tyrosyl-[protein] + ATP = O-phospho-L-tyrosyl-[protein] + ADP + H(+). Functionally, receptor for an extracellular signal required to instruct a cell to differentiate into an R7 photoreceptor. The ligand for sev is the boss (bride of sevenless) protein on the surface of the neighboring R8 cell. This Drosophila melanogaster (Fruit fly) protein is Protein sevenless (sev).